Reading from the N-terminus, the 404-residue chain is Phosphoribulokinase, chloroplastic (404 aa).

The transit peptide at 1-53 (MAFCSPHTTTSLRSPCTTIPNSGFRQNQVIFFTTRSSRRSNTRHGARTFQVSC) directs the protein to the chloroplast. A disulfide bridge connects residues Cys-69 and Cys-108.

It belongs to the phosphoribulokinase family.

The protein localises to the plastid. The protein resides in the chloroplast. The catalysed reaction is D-ribulose 5-phosphate + ATP = D-ribulose 1,5-bisphosphate + ADP + H(+). It participates in carbohydrate biosynthesis; Calvin cycle. Light regulated via thioredoxin by reversible oxidation/reduction of sulfhydryl/disulfide groups. The sequence is that of Phosphoribulokinase, chloroplastic from Triticum aestivum (Wheat).